The primary structure comprises 818 residues: Sorting nexin-29 (818 aa).

In terms of domain architecture, RUN spans 36–180 (SDSDSRVTCL…ILFAINIDNK (145 aa)). The disordered stretch occupies residues 267–299 (VSFDDDEEEQGTGDTLKKMPGTAESSEENSDRS). Phosphoserine is present on residues serine 268, serine 291, serine 292, serine 330, serine 344, serine 447, and serine 452. Disordered stretches follow at residues 343–375 (KSID…PDRT) and 441–462 (RYRE…PSAS). The span at 445 to 462 (ASSPGQGSPLSSLLPSAS) shows a compositional bias: low complexity. Residues 467-547 (MTVHELRQAI…VLKVQLKKYV (81 aa)) adopt a coiled-coil conformation. Serine 642 bears the Phosphoserine mark. Phosphothreonine is present on threonine 644. Phosphoserine occurs at positions 645 and 649. The PX domain occupies 659 to 782 (ALINVWIPSV…PFFVDITPPG (124 aa)). The disordered stretch occupies residues 781-818 (PGEPLNKSSRPKAVSRFPKLSRGHPREVRNVEPQSGDL).

The protein belongs to the sorting nexin family.

This chain is Sorting nexin-29 (Snx29), found in Mus musculus (Mouse).